Consider the following 304-residue polypeptide: MSWIERIKSNITPTRKASIPEGVWTKCDSCGQVLYRAELERNLEVCPKCDHHMRMTARNRLHSLLDEGSLVELGSELEPKDVLKFRDSKKYKDRLASAQKETGEKDALVVMKGTLYGMPVVAAAFEFAFMGGSMGSVVGARFVRAVEQALEDNCPLICFSASGGARMQEALMSLMQMAKTSAALAKMQERGLPYISVLTDPTMGGVSASFAMLGDLNIAEPKALIGFAGPRVIEQTVREKLPPGFQRSEFLIEKGAIDMIVRRPEMRLKLASILAKLMNLPAPNPEAPREGVVVPPVPDQEPEA.

The 270-residue stretch at 23–292 (VWTKCDSCGQ…PNPEAPREGV (270 aa)) folds into the CoA carboxyltransferase N-terminal domain. 4 residues coordinate Zn(2+): Cys-27, Cys-30, Cys-46, and Cys-49. The segment at 27–49 (CDSCGQVLYRAELERNLEVCPKC) adopts a C4-type zinc-finger fold. Residues 284–304 (NPEAPREGVVVPPVPDQEPEA) are disordered. Residues 295–304 (PPVPDQEPEA) are compositionally biased toward pro residues.

Belongs to the AccD/PCCB family. Acetyl-CoA carboxylase is a heterohexamer composed of biotin carboxyl carrier protein (AccB), biotin carboxylase (AccC) and two subunits each of ACCase subunit alpha (AccA) and ACCase subunit beta (AccD). The cofactor is Zn(2+).

The protein localises to the cytoplasm. It carries out the reaction N(6)-carboxybiotinyl-L-lysyl-[protein] + acetyl-CoA = N(6)-biotinyl-L-lysyl-[protein] + malonyl-CoA. It functions in the pathway lipid metabolism; malonyl-CoA biosynthesis; malonyl-CoA from acetyl-CoA: step 1/1. Its function is as follows. Component of the acetyl coenzyme A carboxylase (ACC) complex. Biotin carboxylase (BC) catalyzes the carboxylation of biotin on its carrier protein (BCCP) and then the CO(2) group is transferred by the transcarboxylase to acetyl-CoA to form malonyl-CoA. This Escherichia coli O139:H28 (strain E24377A / ETEC) protein is Acetyl-coenzyme A carboxylase carboxyl transferase subunit beta.